Here is a 146-residue protein sequence, read N- to C-terminus: Anti-sigma F factor (146 aa).

This sequence belongs to the anti-sigma-factor family.

The catalysed reaction is L-seryl-[protein] + ATP = O-phospho-L-seryl-[protein] + ADP + H(+). It catalyses the reaction L-threonyl-[protein] + ATP = O-phospho-L-threonyl-[protein] + ADP + H(+). Functionally, binds to sigma F and blocks its ability to form an RNA polymerase holoenzyme (E-sigma F). Phosphorylates SpoIIAA on a serine residue. This phosphorylation may enable SpoIIAA to act as an anti-anti-sigma factor that counteracts SpoIIAB and thus releases sigma F from inhibition. The protein is Anti-sigma F factor of Geobacillus sp. (strain WCH70).